Reading from the N-terminus, the 110-residue chain is DNA-directed RNA polymerase subunit omega (110 aa).

It belongs to the RNA polymerase subunit omega family. As to quaternary structure, the RNAP catalytic core consists of 2 alpha, 1 beta, 1 beta' and 1 omega subunit. When a sigma factor is associated with the core the holoenzyme is formed, which can initiate transcription.

It catalyses the reaction RNA(n) + a ribonucleoside 5'-triphosphate = RNA(n+1) + diphosphate. Promotes RNA polymerase assembly. Latches the N- and C-terminal regions of the beta' subunit thereby facilitating its interaction with the beta and alpha subunits. This is DNA-directed RNA polymerase subunit omega (rpoZ) from Mycobacterium bovis (strain ATCC BAA-935 / AF2122/97).